Consider the following 580-residue polypeptide: Dihydroxy-acid dehydratase (580 aa).

Residues 1-31 (MPSGSSESPADALRASDSTPDIKPRSRDVTD) are disordered. The segment covering 20–31 (PDIKPRSRDVTD) has biased composition (basic and acidic residues). A [2Fe-2S] cluster-binding site is contributed by Cys-69. Asp-101 is a binding site for Mg(2+). Cys-142 is a [2Fe-2S] cluster binding site. Residues Asp-143 and Lys-144 each contribute to the Mg(2+) site. Lys-144 is modified (N6-carboxylysine). Cys-219 contacts [2Fe-2S] cluster. Glu-470 is a binding site for Mg(2+). The active-site Proton acceptor is the Ser-496.

Belongs to the IlvD/Edd family. Homodimer. [2Fe-2S] cluster serves as cofactor. The cofactor is Mg(2+).

The catalysed reaction is (2R)-2,3-dihydroxy-3-methylbutanoate = 3-methyl-2-oxobutanoate + H2O. It carries out the reaction (2R,3R)-2,3-dihydroxy-3-methylpentanoate = (S)-3-methyl-2-oxopentanoate + H2O. It participates in amino-acid biosynthesis; L-isoleucine biosynthesis; L-isoleucine from 2-oxobutanoate: step 3/4. The protein operates within amino-acid biosynthesis; L-valine biosynthesis; L-valine from pyruvate: step 3/4. Functionally, functions in the biosynthesis of branched-chain amino acids. Catalyzes the dehydration of (2R,3R)-2,3-dihydroxy-3-methylpentanoate (2,3-dihydroxy-3-methylvalerate) into 2-oxo-3-methylpentanoate (2-oxo-3-methylvalerate) and of (2R)-2,3-dihydroxy-3-methylbutanoate (2,3-dihydroxyisovalerate) into 2-oxo-3-methylbutanoate (2-oxoisovalerate), the penultimate precursor to L-isoleucine and L-valine, respectively. This is Dihydroxy-acid dehydratase from Mycobacterium sp. (strain JLS).